Reading from the N-terminus, the 395-residue chain is Chorismate synthase (395 aa).

Residues Arg40 and Arg46 each contribute to the NADP(+) site. Residues 99–120 (PREGRNAPLSRPRPGHADLTGM) form a disordered region. Residues 134–136 (RSS), 256–257 (QA), Gly301, 316–320 (KPIPS), and Arg342 contribute to the FMN site.

Belongs to the chorismate synthase family. In terms of assembly, homotetramer. It depends on FMNH2 as a cofactor.

The catalysed reaction is 5-O-(1-carboxyvinyl)-3-phosphoshikimate = chorismate + phosphate. Its pathway is metabolic intermediate biosynthesis; chorismate biosynthesis; chorismate from D-erythrose 4-phosphate and phosphoenolpyruvate: step 7/7. Catalyzes the anti-1,4-elimination of the C-3 phosphate and the C-6 proR hydrogen from 5-enolpyruvylshikimate-3-phosphate (EPSP) to yield chorismate, which is the branch point compound that serves as the starting substrate for the three terminal pathways of aromatic amino acid biosynthesis. This reaction introduces a second double bond into the aromatic ring system. This chain is Chorismate synthase, found in Bifidobacterium longum (strain DJO10A).